Reading from the N-terminus, the 152-residue chain is Large ribosomal subunit protein bL9 (152 aa).

This sequence belongs to the bacterial ribosomal protein bL9 family.

In terms of biological role, binds to the 23S rRNA. This Coxiella burnetii (strain Dugway 5J108-111) protein is Large ribosomal subunit protein bL9.